A 358-amino-acid chain; its full sequence is Microbial Terpene synthase-like protein 13 (358 aa).

Belongs to the terpene synthase family.

No terpene synthase activity detected in vitro. This chain is Microbial Terpene synthase-like protein 13, found in Selaginella moellendorffii (Spikemoss).